The primary structure comprises 451 residues: tRNA-2-methylthio-N(6)-dimethylallyladenosine synthase (451 aa).

Positions 1–116 constitute an MTTase N-terminal domain; it reads MTYFFETYGC…LPQIFDEIKA (116 aa). The [4Fe-4S] cluster site is built by C10, C46, C79, C162, C166, and C169. The region spanning 148–384 is the Radical SAM core domain; the sequence is SPKSFQSYVP…IDLQLKITAK (237 aa). One can recognise a TRAM domain in the interval 387–451; the sequence is KAKLGKKVDI…KGKTFRANLN (65 aa).

This sequence belongs to the methylthiotransferase family. MiaB subfamily. As to quaternary structure, monomer. [4Fe-4S] cluster serves as cofactor.

It is found in the cytoplasm. The enzyme catalyses N(6)-dimethylallyladenosine(37) in tRNA + (sulfur carrier)-SH + AH2 + 2 S-adenosyl-L-methionine = 2-methylsulfanyl-N(6)-dimethylallyladenosine(37) in tRNA + (sulfur carrier)-H + 5'-deoxyadenosine + L-methionine + A + S-adenosyl-L-homocysteine + 2 H(+). Its function is as follows. Catalyzes the methylthiolation of N6-(dimethylallyl)adenosine (i(6)A), leading to the formation of 2-methylthio-N6-(dimethylallyl)adenosine (ms(2)i(6)A) at position 37 in tRNAs that read codons beginning with uridine. This is tRNA-2-methylthio-N(6)-dimethylallyladenosine synthase from Treponema denticola (strain ATCC 35405 / DSM 14222 / CIP 103919 / JCM 8153 / KCTC 15104).